Here is a 216-residue protein sequence, read N- to C-terminus: MTDPTSIKHQTTLTSGTSADFTQAGEPFALFAEWFAEASKSEPNDPNAMALSTVDADGLPDVRMVLMKGYDADGFVFYSHKASQKGQELAANPKAALLFHWKSLRRQVRIRGLVTPVTDAEADAYFATRPKQAQLGAWASKQSQPLESRFAFEQAIAKVATQYIIGEVPRPPGWSGWRITPVRMEFWHDRPFRLHDRIEFRREAAGQPWTKVRMYP.

FMN contacts are provided by residues 63–68 (RMVLMK), 78–79 (YS), K85, and Q107. Residue K68 coordinates substrate. 2 residues coordinate substrate: Y125 and R129. Residues 142 to 143 (QS) and W187 each bind FMN. A substrate-binding site is contributed by 193-195 (RLH). R197 contributes to the FMN binding site.

Belongs to the pyridoxamine 5'-phosphate oxidase family. In terms of assembly, homodimer. FMN is required as a cofactor.

The catalysed reaction is pyridoxamine 5'-phosphate + O2 + H2O = pyridoxal 5'-phosphate + H2O2 + NH4(+). It catalyses the reaction pyridoxine 5'-phosphate + O2 = pyridoxal 5'-phosphate + H2O2. The protein operates within cofactor metabolism; pyridoxal 5'-phosphate salvage; pyridoxal 5'-phosphate from pyridoxamine 5'-phosphate: step 1/1. It participates in cofactor metabolism; pyridoxal 5'-phosphate salvage; pyridoxal 5'-phosphate from pyridoxine 5'-phosphate: step 1/1. In terms of biological role, catalyzes the oxidation of either pyridoxine 5'-phosphate (PNP) or pyridoxamine 5'-phosphate (PMP) into pyridoxal 5'-phosphate (PLP). The chain is Pyridoxine/pyridoxamine 5'-phosphate oxidase from Bradyrhizobium sp. (strain ORS 278).